Reading from the N-terminus, the 283-residue chain is MSATMRETGWAKINLALHVRARRADGYHDIETLFAFVDGGDTIEAALAATDTLVIDGEFAEGLSSGADNLVLRVLALLRARYGADRVPPLAVRLTKRLPLAAGIGGGSADAAAMARLVRTHFLPELGDATLARIVGPLGADIAACVASTTCMGSGTGEDLHAVAGLRIAGVPVLLVNPRQPVATGPVFAAWDGIDRGPLYIGTDYRAQLIGARNDLQRPALAACPAISDILLELGALRPWLARMSGSGATCFALFDAAADRDAAKAVLAARHPGWWLMAGALR.

The active site involves Lys-12. 99–109 (PLAAGIGGGSA) is a binding site for ATP. Asp-141 is an active-site residue.

Belongs to the GHMP kinase family. IspE subfamily.

It carries out the reaction 4-CDP-2-C-methyl-D-erythritol + ATP = 4-CDP-2-C-methyl-D-erythritol 2-phosphate + ADP + H(+). The protein operates within isoprenoid biosynthesis; isopentenyl diphosphate biosynthesis via DXP pathway; isopentenyl diphosphate from 1-deoxy-D-xylulose 5-phosphate: step 3/6. In terms of biological role, catalyzes the phosphorylation of the position 2 hydroxy group of 4-diphosphocytidyl-2C-methyl-D-erythritol. The sequence is that of 4-diphosphocytidyl-2-C-methyl-D-erythritol kinase from Sphingopyxis alaskensis (strain DSM 13593 / LMG 18877 / RB2256) (Sphingomonas alaskensis).